Reading from the N-terminus, the 137-residue chain is Phosphoribosyl-AMP cyclohydrolase (137 aa).

Residue aspartate 83 coordinates Mg(2+). Cysteine 84 serves as a coordination point for Zn(2+). Mg(2+)-binding residues include aspartate 85 and aspartate 87. Zn(2+)-binding residues include cysteine 101 and cysteine 108.

The protein belongs to the PRA-CH family. Homodimer. Mg(2+) serves as cofactor. Zn(2+) is required as a cofactor.

It is found in the cytoplasm. It catalyses the reaction 1-(5-phospho-beta-D-ribosyl)-5'-AMP + H2O = 1-(5-phospho-beta-D-ribosyl)-5-[(5-phospho-beta-D-ribosylamino)methylideneamino]imidazole-4-carboxamide. The protein operates within amino-acid biosynthesis; L-histidine biosynthesis; L-histidine from 5-phospho-alpha-D-ribose 1-diphosphate: step 3/9. Functionally, catalyzes the hydrolysis of the adenine ring of phosphoribosyl-AMP. This Burkholderia mallei (strain ATCC 23344) protein is Phosphoribosyl-AMP cyclohydrolase.